The following is a 409-amino-acid chain: Lissencephaly-1 homolog (409 aa).

The LisH domain maps to 7 to 39 (RRERSNQAIADYLGSNGYTDALEAFRKEADMPN). A coiled-coil region spans residues 54–81 (TSVIRLQKKVMELEAKLSEAEKEAIEGA). WD repeat units follow at residues 104–145 (GHRA…RTLK), 146–185 (GHTDSVQDLAFDSHGKLLASCSSDLSIKLWDFQQTFECVK), 189–228 (GHDHNVSSVSFVPAGDYLLSASRDKTIKMWEVATGYCVKT), 231–270 (GHREWVRMVRVNVDGSLMASCSNDHSVRVWQTNSKECKAE), 273–332 (EHEN…CLFT), 335–374 (GHDNWVRGIVFHPGGKYMLSASDDKTLRIWDLRNKRCMKT), and 377–409 (AHSHFCTSLDMHKSHPYVISGSVDTTVKVWECR).

The protein belongs to the WD repeat LIS1/nudF family.

It is found in the cytoplasm. It localises to the cytoskeleton. The protein resides in the microtubule organizing center. The protein localises to the centrosome. Functionally, positively regulates the activity of the minus-end directed microtubule motor protein dynein. May enhance dynein-mediated microtubule sliding by targeting dynein to the microtubule plus end. Required for several dynein- and microtubule-dependent processes. The protein is Lissencephaly-1 homolog of Aedes aegypti (Yellowfever mosquito).